A 287-amino-acid polypeptide reads, in one-letter code: Survival motor neuron protein (287 aa).

The interval methionine 1 to aspartate 28 is disordered. The segment at proline 9–aspartate 40 is P1 (binding site for GEMIN2). Threonine 21 carries the phosphothreonine modification. A phosphoserine mark is found at serine 24 and serine 27. A Glycyl lysine isopeptide (Lys-Gly) (interchain with G-Cter in SUMO2) cross-link involves residue lysine 47. Disordered regions lie at residues lysine 51–glutamine 86 and asparagine 149–histidine 221. Residues glycine 64–arginine 77 are compositionally biased toward basic residues. A Phosphothreonine modification is found at threonine 65. Residue threonine 80 is modified to Phosphothreonine; by PKA. The Tudor domain occupies glutamine 86 to isoleucine 146. The tract at residues asparagine 92–lysine 204 is required for interaction with RPP20/POP7. The span at asparagine 149 to serine 160 shows a compositional bias: low complexity. Residues serine 167 to arginine 179 are compositionally biased toward polar residues. Lysine 204 is covalently cross-linked (Glycyl lysine isopeptide (Lys-Gly) (interchain with G-Cter in SUMO2)). Pro residues predominate over residues glycine 211–histidine 221. Positions proline 234–tryptophan 261 are P2 (binding site for SM B). The interval glycine 273–asparagine 287 is required for interaction with SYNCRIP.

Belongs to the SMN family. As to quaternary structure, homooligomer; may form higher order homooligomers in the dimer to octamer range. Part of the core SMN complex that contains SMN1, GEMIN2/SIP1, DDX20/GEMIN3, GEMIN4, GEMIN5, GEMIN6, GEMIN7, GEMIN8 and STRAP/UNRIP. Part of the SMN-Sm complex that contains SMN1, GEMIN2/SIP1, DDX20/GEMIN3, GEMIN4, GEMIN5, GEMIN6, GEMIN7, GEMIN8, STRAP/UNRIP and the Sm proteins SNRPB, SNRPD1, SNRPD2, SNRPD3, SNRPE, SNRPF and SNRPG. Component of an import snRNP complex composed of KPNB1, RNUT1, SMN1 and ZNF259. Interacts with DDX20, FBL, NOLA1, RNUT1, SYNCRIP and with several spliceosomal snRNP core Sm proteins, including SNRPB, SNRPD1, SNRPD2, SNRPD3, SNRPE and ILF3. Interacts with GEMIN2; the interaction is direct. Interacts with GEMIN3; the interaction is direct. Interacts with GEMIN8; the interaction is direct. Interacts with SNRPB; the interaction is direct. Interacts (via Tudor domain) with SNRPD1 (via C-terminus); the interaction is direct. Interacts with SNRPD2; the interaction is direct. Interacts (via Tudor domain) with SNRPD3 (via C-terminus); the interaction is direct. Interacts with SNRPE; the interaction is direct. Interacts with OSTF1, LSM10, LSM11 and RPP20/POP7. Interacts (via C-terminal region) with ZPR1 (via C-terminal region). Interacts (via Tudor domain) with COIL. Interacts with SETX; recruits SETX to POLR2A. Interacts with POLR2A (via the C-terminal domain (CTD)). Interacts with PRMT5. Interacts with XRN2. Interacts (via C-terminus) with FMR1 (via C-terminus); the interaction is direct and occurs in a RNA-independent manner. Interacts (via Tudor domain) with SF3B2 ('Arg-508'-methylated form). Interacts with WRAP53/TCAB1. Interacts (via Tudor domain) with ELAVL4 in an RNA-independent manner; the interaction is required for localization of ELAVL4 to RNA granules. Interacts with FRG1.

Its subcellular location is the nucleus. It is found in the gem. It localises to the cajal body. The protein resides in the cytoplasm. The protein localises to the cytoplasmic granule. Its subcellular location is the perikaryon. It is found in the cell projection. It localises to the neuron projection. The protein resides in the axon. The protein localises to the myofibril. Its subcellular location is the sarcomere. It is found in the z line. In terms of biological role, the SMN complex catalyzes the assembly of small nuclear ribonucleoproteins (snRNPs), the building blocks of the spliceosome, and thereby plays an important role in the splicing of cellular pre-mRNAs. Most spliceosomal snRNPs contain a common set of Sm proteins SNRPB, SNRPD1, SNRPD2, SNRPD3, SNRPE, SNRPF and SNRPG that assemble in a heptameric protein ring on the Sm site of the small nuclear RNA to form the core snRNP (Sm core). In the cytosol, the Sm proteins SNRPD1, SNRPD2, SNRPE, SNRPF and SNRPG are trapped in an inactive 6S pICln-Sm complex by the chaperone CLNS1A that controls the assembly of the core snRNP. To assemble core snRNPs, the SMN complex accepts the trapped 5Sm proteins from CLNS1A forming an intermediate. Binding of snRNA inside 5Sm ultimately triggers eviction of the SMN complex, thereby allowing binding of SNRPD3 and SNRPB to complete assembly of the core snRNP. Within the SMN complex, SMN1 acts as a structural backbone and together with GEMIN2 it gathers the Sm complex subunits. Ensures the correct splicing of U12 intron-containing genes that may be important for normal motor and proprioceptive neurons development. Also required for resolving RNA-DNA hybrids created by RNA polymerase II, that form R-loop in transcription terminal regions, an important step in proper transcription termination. May also play a role in the metabolism of small nucleolar ribonucleoprotein (snoRNPs). The sequence is that of Survival motor neuron protein (SMN1) from Bos taurus (Bovine).